We begin with the raw amino-acid sequence, 214 residues long: Orotidine 5'-phosphate decarboxylase (214 aa).

Substrate is bound by residues Asp-11, Lys-33, 59 to 68 (DFKIADIPNT), Ser-114, 164 to 174 (PGIGSQGGRAS), Gly-187, and Arg-188. Lys-61 (proton donor) is an active-site residue.

It belongs to the OMP decarboxylase family. Type 1 subfamily. As to quaternary structure, homodimer.

It carries out the reaction orotidine 5'-phosphate + H(+) = UMP + CO2. The protein operates within pyrimidine metabolism; UMP biosynthesis via de novo pathway; UMP from orotate: step 2/2. Its function is as follows. Catalyzes the decarboxylation of orotidine 5'-monophosphate (OMP) to uridine 5'-monophosphate (UMP). The polypeptide is Orotidine 5'-phosphate decarboxylase (Thermoplasma acidophilum (strain ATCC 25905 / DSM 1728 / JCM 9062 / NBRC 15155 / AMRC-C165)).